We begin with the raw amino-acid sequence, 177 residues long: ATP synthase subunit delta (177 aa).

The protein belongs to the ATPase delta chain family. In terms of assembly, F-type ATPases have 2 components, F(1) - the catalytic core - and F(0) - the membrane proton channel. F(1) has five subunits: alpha(3), beta(3), gamma(1), delta(1), epsilon(1). F(0) has three main subunits: a(1), b(2) and c(10-14). The alpha and beta chains form an alternating ring which encloses part of the gamma chain. F(1) is attached to F(0) by a central stalk formed by the gamma and epsilon chains, while a peripheral stalk is formed by the delta and b chains.

It is found in the cell inner membrane. Functionally, f(1)F(0) ATP synthase produces ATP from ADP in the presence of a proton or sodium gradient. F-type ATPases consist of two structural domains, F(1) containing the extramembraneous catalytic core and F(0) containing the membrane proton channel, linked together by a central stalk and a peripheral stalk. During catalysis, ATP synthesis in the catalytic domain of F(1) is coupled via a rotary mechanism of the central stalk subunits to proton translocation. Its function is as follows. This protein is part of the stalk that links CF(0) to CF(1). It either transmits conformational changes from CF(0) to CF(1) or is implicated in proton conduction. This Shewanella denitrificans (strain OS217 / ATCC BAA-1090 / DSM 15013) protein is ATP synthase subunit delta.